Reading from the N-terminus, the 584-residue chain is 2-succinyl-5-enolpyruvyl-6-hydroxy-3-cyclohexene-1-carboxylate synthase (584 aa).

This sequence belongs to the TPP enzyme family. MenD subfamily. Homodimer. Requires Mg(2+) as cofactor. It depends on Mn(2+) as a cofactor. Thiamine diphosphate serves as cofactor.

It carries out the reaction isochorismate + 2-oxoglutarate + H(+) = 5-enolpyruvoyl-6-hydroxy-2-succinyl-cyclohex-3-ene-1-carboxylate + CO2. Its pathway is quinol/quinone metabolism; 1,4-dihydroxy-2-naphthoate biosynthesis; 1,4-dihydroxy-2-naphthoate from chorismate: step 2/7. The protein operates within quinol/quinone metabolism; menaquinone biosynthesis. Its function is as follows. Catalyzes the thiamine diphosphate-dependent decarboxylation of 2-oxoglutarate and the subsequent addition of the resulting succinic semialdehyde-thiamine pyrophosphate anion to isochorismate to yield 2-succinyl-5-enolpyruvyl-6-hydroxy-3-cyclohexene-1-carboxylate (SEPHCHC). The sequence is that of 2-succinyl-5-enolpyruvyl-6-hydroxy-3-cyclohexene-1-carboxylate synthase from Bacillus cereus (strain ZK / E33L).